A 2186-amino-acid polypeptide reads, in one-letter code: Non-reducing polyketide synthase men2 (2186 aa).

The region spanning 16–255 (FFGDQTVDAL…MQLPLGTPAH (240 aa)) is the Starter acyltransferase (SAT) domain. Residues 382-815 (SNLIAVVGQS…GGNNCVLLEE (434 aa)) enclose the Ketosynthase family 3 (KS3) domain. Residues cysteine 554, histidine 690, and histidine 729 each act as for beta-ketoacyl synthase activity in the active site. The Malonyl-CoA:ACP transacylase (MAT) domain occupies 914-1204 (VFAFTGQGAQ…SSLVKSTLSA (291 aa)). Residues 1299–1623 (TASLQQVRSE…TRRVLATVLG (325 aa)) form a product template (PT) domain region. The N-terminal hotdog fold stretch occupies residues 1303 to 1434 (QQVRSEQING…CKLHFDKRGS (132 aa)). One can recognise a PKS/mFAS DH domain in the interval 1303–1619 (QQVRSEQING…FQRLTRRVLA (317 aa)). Residue histidine 1335 is the Proton acceptor; for dehydratase activity of the active site. The segment at 1463-1619 (TGHRLPKSVV…FQRLTRRVLA (157 aa)) is C-terminal hotdog fold. Aspartate 1523 functions as the Proton donor; for dehydratase activity in the catalytic mechanism. Residues 1666–1742 (VGDEKADAAI…GLRRAISELS (77 aa)) form the Carrier 1 domain. O-(pantetheine 4'-phosphoryl)serine is present on serine 1702. The tract at residues 1747 to 1785 (GPASGSVSVSSSATTTHGMTTPSSTSSAQSSQSSQTPDG) is disordered. Low complexity predominate over residues 1749 to 1783 (ASGSVSVSSSATTTHGMTTPSSTSSAQSSQSSQTP). The region spanning 1784 to 1861 (DGPGIYANAV…HVRRALGSDS (78 aa)) is the Carrier 2 domain. O-(pantetheine 4'-phosphoryl)serine is present on serine 1821. The disordered stretch occupies residues 1857 to 1878 (LGSDSDGDSKPKSAPAPPAPEP). The tract at residues 1921–2163 (LFFLPDGTGY…TMPCDHLSLL (243 aa)) is thioesterase (TE) domain.

Pantetheine 4'-phosphate is required as a cofactor.

It functions in the pathway secondary metabolite biosynthesis. Its function is as follows. Non-reducing polyketide synthase; part of the gene cluster that mediates the biosynthesis of menisporopsin A, a bioactive macrocyclic polylactone. The biosynthesis of menisporopsin A is performed by a reducing (man1) and a non-reducing (men2) polyketide synthase that catalyze the formation of each menisporopsin A subunits, while the esterification and cyclolactonization activities are probably peformed by the unusual thioesterase domain of men2. First, a reduced diketide intermediate, 3-hydroxybutyryl-S-ACP is produced by men1 and transferred to men2; this is followed by a second reduced diketide which is further elongated using 3 units of malonyl-coA to form a reduced pentaketide. The cyclization of this intermediate by the PT domain forms the second subunit, 2,4-dihydroxy-6-(2-hydroxy-n-propyl)benzoyl-S-ACP. The TE domain of men2 then esterifies the secondary hydroxyl group on the side chain of the second subunit with the acyl-TE of the first subunit to form the first ester intermediate. This process occurs iteratively to form a linear tetraester intermediate. The final subunit is formed by a similar process, except that an extra malonyl-CoA is required in an additional elongation step to form a reduced hexaketide intermediate, and the carbonyl group next to the secondary hydroxyl group is reduced by a trans-acting ketoreductase. Again, the PT domain catalyzes cyclization to form the largest subunit, 2,4-dihydroxy-6-(2,4-dihydroxy-n-pentyl) benzoyl-S-ACP. Then the linear pentaester intermediate is formed. In this step, if the intermediate transfer rate is slow, intra- molecular cyclization involving the secondary hydroxyl group of the pentaester intermediate may occur to form menisporopsin B. Alternatively, transfer of the pentaester intermediate to the TE domain would allow cyclolactonization to be catalyzed by the TE to form menisporopsin A. This is Non-reducing polyketide synthase men2 from Menisporopsis theobromae.